The chain runs to 196 residues: MSYYAFEGLIPVVHPTAFVHPSAVLIGDVIVGAGVYIGPLASLRGDYGRLIVQAGANIQDGCIMHGYCDTDTIVGENGHIGHGAILHGCVIGRDALVGMNSVIMDGAVIGEESIVAAMSFVKAGFRGEKRQLLMGTPARAVRSVSDDELHWKRLNTKEYQDLVGRCHASLHETQPLRQMEENRPRLQGTTDVMPKR.

Positions 177–196 (RQMEENRPRLQGTTDVMPKR) are disordered.

The protein belongs to the transferase hexapeptide repeat family.

It participates in amine and polyamine metabolism; carnitine metabolism. Overproduction of CaiE stimulates the activity of CaiB and CaiD. The polypeptide is Carnitine operon protein CaiE (Escherichia coli O17:K52:H18 (strain UMN026 / ExPEC)).